The primary structure comprises 365 residues: tRNA-specific 2-thiouridylase MnmA (365 aa).

Residues 14–21 (AMSGGVDS) and Leu-40 contribute to the ATP site. Residue Cys-108 is the Nucleophile of the active site. Cys-108 and Cys-204 form a disulfide bridge. Gly-132 is a binding site for ATP. The segment at 154–156 (KDQ) is interaction with tRNA. Cys-204 (cysteine persulfide intermediate) is an active-site residue.

The protein belongs to the MnmA/TRMU family.

The protein resides in the cytoplasm. The catalysed reaction is S-sulfanyl-L-cysteinyl-[protein] + uridine(34) in tRNA + AH2 + ATP = 2-thiouridine(34) in tRNA + L-cysteinyl-[protein] + A + AMP + diphosphate + H(+). Its function is as follows. Catalyzes the 2-thiolation of uridine at the wobble position (U34) of tRNA, leading to the formation of s(2)U34. In Rickettsia africae (strain ESF-5), this protein is tRNA-specific 2-thiouridylase MnmA.